A 1087-amino-acid polypeptide reads, in one-letter code: Apoptosis-stimulating of p53 protein 1 (1087 aa).

The tract at residues 82 to 122 (HEDSPTESSEQGARQTQEQRTQRSVVNVPGEKRTENGVGNP) is disordered. A compositionally biased stretch (polar residues) spans 87–106 (TESSEQGARQTQEQRTQRSV). Phosphoserine occurs at positions 332 and 335. 3 disordered regions span residues 374 to 415 (SSAA…GMEG), 442 to 721 (IGKG…PNIQ), and 734 to 878 (GMEG…TGHG). Over residues 393-405 (KQNSASVKSTQMT) the composition is skewed to polar residues. A compositionally biased stretch (pro residues) spans 445–458 (GPPPIPGVGKPLPP). Residues 459–476 (SYGTYPSSGPLGPGSTSS) are compositionally biased toward low complexity. Residues 506–520 (NAPQPGSSQQIQQRI) are compositionally biased toward polar residues. Pro residues predominate over residues 523-536 (PPSPTYPPAGPPAF). Asymmetric dimethylarginine is present on Arg552. Positions 570–589 (QTVNSSSIYSMYLQQATPPK) are enriched in polar residues. A compositionally biased stretch (low complexity) spans 610-625 (PVLPSGSASPSPLPFL). Phosphoserine occurs at positions 679 and 708. The span at 805 to 831 (PQTTHQTAEPTEDNNNNVAPVPSTEQI) shows a compositional bias: polar residues. ANK repeat units follow at residues 917–949 (EGITPLHNAVCAGHHHIVKFLLDFGVNVNAADS) and 950–982 (DGWTPLHCAASCNSVHLCKQLVESGAAIFASTI). The SH3 domain occupies 1016 to 1078 (MNKGTVYALW…PKNLLGLYPR (63 aa)).

Belongs to the ASPP family. In terms of assembly, interacts with P53/TP53; the interaction promotes pro-apoptotic activity.

It localises to the cytoplasm. Its subcellular location is the nucleus. Regulator that plays a central role in regulation of apoptosis via its interaction with p53/TP53. Regulates TP53 by enhancing the DNA binding and transactivation function of TP53 on the promoters of proapoptotic genes in vivo. The polypeptide is Apoptosis-stimulating of p53 protein 1 (Ppp1r13b) (Mus musculus (Mouse)).